Consider the following 367-residue polypeptide: Ribosomal lysine N-methyltransferase 5 (367 aa).

A disordered region spans residues 55–74; it reads EGGRKKKRVRRRNKASSVEE. Over residues 58–68 the composition is skewed to basic residues; that stretch reads RKKKRVRRRNK. S-adenosyl-L-methionine contacts are provided by residues tryptophan 110, 170-172, aspartate 192, tryptophan 256, and methionine 288; that span reads GAG.

It belongs to the class I-like SAM-binding methyltransferase superfamily. RKM5 family.

S-adenosyl-L-methionine-dependent protein-lysine N-methyltransferase that monomethylates 60S ribosomal protein L1 (RPL1A and RPL1B) at 'Lys-46'. In Saccharomyces cerevisiae (strain Lalvin EC1118 / Prise de mousse) (Baker's yeast), this protein is Ribosomal lysine N-methyltransferase 5 (RKM5).